Consider the following 505-residue polypeptide: Zinc finger protein 649 (505 aa).

The 72-residue stretch at 8–79 folds into the KRAB domain; that stretch reads LTLEDVAVDF…EDEIHSPAHP (72 aa). A Glycyl lysine isopeptide (Lys-Gly) (interchain with G-Cter in SUMO2) cross-link involves residue Lys-112. 10 consecutive C2H2-type zinc fingers follow at residues 178–200, 206–228, 234–256, 262–284, 290–312, 318–340, 346–368, 374–396, 402–424, and 430–452; these read HECTDCGKAFLKKSQLTEHKRIH, HVCSLCGKAFYKKYRLTEHERAH, HGCSLCGKAFYKRYRLTEHERAH, YGCSECGKAFPRKSELTEHQRIH, HQCSECGRAFSRKSLLVVHQRTH, HTCSECGKGFIQKGNLNIHQRTH, YGCIDCGKAFSQKSCLVAHQRYH, FVCPECGQPCSQKSGLIRHQKIH, YKCSDCGKAFLTKTMLIVHHRTH, and YGCDECEKAYFYMSCLVKHKRIH. The disordered stretch occupies residues 455 to 481; that stretch reads EKRGDSVKVENPSTASHSLSPSEHVQG. Positions 465–477 are enriched in polar residues; the sequence is NPSTASHSLSPSE.

This sequence belongs to the krueppel C2H2-type zinc-finger protein family. In terms of tissue distribution, highly expressed in heart, skeletal muscle, and brain. Lower expression in liver, lung, kidney, pancreas and placenta.

The protein localises to the nucleus. Its function is as follows. Transcriptional repressor. Regulator of transcriptional factor complexes and may suppress SRE and AP-1 transcription activities mediated by growth factor signaling pathways. The sequence is that of Zinc finger protein 649 (ZNF649) from Homo sapiens (Human).